We begin with the raw amino-acid sequence, 299 residues long: MLPSKPLVIVLIGPTASGKTELAIDIAKYFNIHIHNVDSRQIYRFMDIGTAKPTKVQQRAIKHFLIDVEDPSVKVNAKQFQEIATKSINRELNQKKTPFLVGGSGLYMNSIIKGFFAPDVPPQSFLRSQFEKLGQEKCWELLKVCDPELTKTINYADQIRTIRGLEVFYVTGKRMSSQRFQNPPPWRILELGINRVDLKERIFKRTKNMFEFGIIEETKNIINQYGSTLPLLETIGYKEAKNVIKENLTIEEAIELTTTKTIQFAKRQKTWFRNKNNAIWLNNKNLLKDAIIKIEYALG.

Residue 13-20 participates in ATP binding; it reads GPTASGKT. Position 15–20 (15–20) interacts with substrate; sequence TASGKT. The segment at 38 to 41 is interaction with substrate tRNA; that stretch reads DSRQ.

Belongs to the IPP transferase family. Monomer. Mg(2+) serves as cofactor.

It catalyses the reaction adenosine(37) in tRNA + dimethylallyl diphosphate = N(6)-dimethylallyladenosine(37) in tRNA + diphosphate. Catalyzes the transfer of a dimethylallyl group onto the adenine at position 37 in tRNAs that read codons beginning with uridine, leading to the formation of N6-(dimethylallyl)adenosine (i(6)A). This Prochlorococcus marinus (strain MIT 9515) protein is tRNA dimethylallyltransferase.